A 300-amino-acid polypeptide reads, in one-letter code: Rhodopsin (300 aa).

Topologically, residues 1-18 (LHMIHLHWYQYPPMNPMM) are extracellular. A helical transmembrane segment spans residues 19–43 (YPLLLVFMLITGILCLAGNFVTIWV). Residues 44–55 (FMNTKSLRTPAN) are Cytoplasmic-facing. Residues 56-78 (LLVVNLAMSDFLMMFTMFPPMMV) form a helical membrane-spanning segment. Residues 79–92 (TCYYHTWTLGATFC) lie on the Extracellular side of the membrane. Residues Cys92 and Cys168 are joined by a disulfide bond. A helical transmembrane segment spans residues 93–115 (QVYAFLGNLCGCASIWTMVFITF). The 'Ionic lock' involved in activated form stabilization signature appears at 116 to 118 (DRY). The Cytoplasmic portion of the chain corresponds to 116 to 134 (DRYNVIVKGVAGEPLSTKK). Residues 135–155 (ASLWILTIWILSITWCIAPFF) form a helical membrane-spanning segment. The Extracellular segment spans residues 156–181 (GWNRYVPEGNTGCGTDYLSEDILSRS). Residues 182–203 (YLYIYSTWVYFLPLAITIYCHV) form a helical membrane-spanning segment. Residues 204–244 (FIIKAVAAHEKGMRDQAKKMGIKSLRNEEAQKTSAECRLAK) lie on the Cytoplasmic side of the membrane. Residues 245–266 (IAMTTVALWFIAWTPYLLINWV) traverse the membrane as a helical segment. The Extracellular segment spans residues 267–277 (GMFARSYLSPV). Residues 278-299 (YTIWGYVFAKANAVYNPIVYAI) traverse the membrane as a helical segment. Position 287 is an N6-(retinylidene)lysine (Lys287).

Belongs to the G-protein coupled receptor 1 family. Opsin subfamily. Homodimer. Interacts with GNAQ. In terms of processing, contains one covalently linked retinal chromophore.

It is found in the cell projection. The protein localises to the rhabdomere membrane. Photoreceptor required for image-forming vision at low light intensity. Can use both retinal and 3-dehydroretinal as visual pigment. Light-induced isomerization of 11-cis to all-trans retinal triggers a conformational change that activates signaling via G-proteins. Signaling via GNAQ probably mediates the activation of phospholipase C. The protein is Rhodopsin (RHO) of Cambarus maculatus (Freckled crayfish).